The primary structure comprises 465 residues: UPF0422 protein CBU_0937 (465 aa).

The N-terminal stretch at Met1–Ala23 is a signal peptide. Residues Thr28–Ala60 are a coiled coil.

This sequence belongs to the UPF0422 family.

The chain is UPF0422 protein CBU_0937 from Coxiella burnetii (strain RSA 493 / Nine Mile phase I).